The primary structure comprises 285 residues: 2-dehydro-3-deoxyphosphooctonate aldolase (285 aa).

The protein belongs to the KdsA family.

It is found in the cytoplasm. It catalyses the reaction D-arabinose 5-phosphate + phosphoenolpyruvate + H2O = 3-deoxy-alpha-D-manno-2-octulosonate-8-phosphate + phosphate. The protein operates within carbohydrate biosynthesis; 3-deoxy-D-manno-octulosonate biosynthesis; 3-deoxy-D-manno-octulosonate from D-ribulose 5-phosphate: step 2/3. Its pathway is bacterial outer membrane biogenesis; lipopolysaccharide biosynthesis. In Variovorax paradoxus (strain S110), this protein is 2-dehydro-3-deoxyphosphooctonate aldolase.